Reading from the N-terminus, the 179-residue chain is ATP-dependent protease subunit HslV (179 aa).

Residue T6 is part of the active site. Residues S162, C165, and T168 each contribute to the Na(+) site.

This sequence belongs to the peptidase T1B family. HslV subfamily. A double ring-shaped homohexamer of HslV is capped on each side by a ring-shaped HslU homohexamer. The assembly of the HslU/HslV complex is dependent on binding of ATP.

The protein localises to the cytoplasm. It catalyses the reaction ATP-dependent cleavage of peptide bonds with broad specificity.. With respect to regulation, allosterically activated by HslU binding. In terms of biological role, protease subunit of a proteasome-like degradation complex believed to be a general protein degrading machinery. The chain is ATP-dependent protease subunit HslV from Maridesulfovibrio salexigens (strain ATCC 14822 / DSM 2638 / NCIMB 8403 / VKM B-1763) (Desulfovibrio salexigens).